A 492-amino-acid polypeptide reads, in one-letter code: Signal transduction histidine-protein kinase/phosphatase MprB (492 aa).

At 1–27 the chain is on the cytoplasmic side; sequence MAFPPNSWRPTGPLPTSSLSLRWRVMM. A helical membrane pass occupies residues 28 to 48; sequence LAMSMVALVVVLMAVAVYAVV. The Extracellular segment spans residues 49–165; that stretch reads SRALYDDLDN…TVQVLRRLGT (117 aa). The chain crosses the membrane as a helical span at residues 166–186; the sequence is VLLIVGGIGVAVAAIAGGAVA. Positions 187-239 constitute an HAMP domain; the sequence is RAGLRPVGRLTEAAERVARTDDLRPIPVVGSDELARLTEAFNMMLRALAESRE. The Cytoplasmic portion of the chain corresponds to 187–492; it reads RAGLRPVGRL…DRGGHTVATE (306 aa). A Histidine kinase domain is found at 247–467; it reads DAGHELRTPL…SVHMLLPGQR (221 aa). At H250 the chain carries Phosphohistidine; by autocatalysis. The disordered stretch occupies residues 470–492; it reads DPGATRSAEGFVDDRGGHTVATE.

It depends on Mg(2+) as a cofactor. Mn(2+) serves as cofactor. Autophosphorylated.

It localises to the cell membrane. It carries out the reaction ATP + protein L-histidine = ADP + protein N-phospho-L-histidine.. Member of the two-component regulatory system MprB/MprA which contributes to maintaining a balance among several systems involved in stress resistance and is required for establishment and maintenance of persistent infection in the host. In response to environmental signals MprB acts both as a membrane-associated protein kinase that undergoes autophosphorylation and subsequently transfers the phosphate to MprA, and a protein phosphatase that dephosphorylates phospho-MprA. In Mycolicibacterium smegmatis (strain ATCC 700084 / mc(2)155) (Mycobacterium smegmatis), this protein is Signal transduction histidine-protein kinase/phosphatase MprB (mprB).